The following is a 522-amino-acid chain: Sugar transport protein 1 (522 aa).

The Cytoplasmic segment spans residues Met-1–Phe-22. A helical membrane pass occupies residues Val-23 to Ile-43. The Extracellular portion of the chain corresponds to Ser-44–Ser-79. A helical transmembrane segment spans residues Pro-80 to Ala-100. Topologically, residues Ser-101 to Gly-117 are cytoplasmic. The helical transmembrane segment at Ile-118–Val-138 threads the bilayer. At Gly-139–Arg-140 the chain is on the extracellular side. The chain crosses the membrane as a helical span at residues Ile-141 to Met-161. Topologically, residues Ala-162 to Asn-171 are cytoplasmic. A helical transmembrane segment spans residues Ile-172–Phe-192. Residues Ala-193 to Arg-202 are Extracellular-facing. The helical transmembrane segment at Leu-203–Pro-223 threads the bilayer. Residues Asp-224–Met-289 lie on the Cytoplasmic side of the membrane. Ser-252 carries the post-translational modification Phosphoserine. Residues Ile-290–Phe-310 traverse the membrane as a helical segment. At Asn-311 to Leu-321 the chain is on the extracellular side. Residues Met-322–Val-342 form a helical membrane-spanning segment. Residues Asp-343–Arg-348 lie on the Cytoplasmic side of the membrane. The helical transmembrane segment at Phe-349 to Ile-369 threads the bilayer. Residues Gly-370 to Lys-384 are Extracellular-facing. Residues Trp-385–Trp-405 traverse the membrane as a helical segment. At Gly-406–Ser-427 the chain is on the cytoplasmic side. The chain crosses the membrane as a helical span at residues Ile-428–Leu-448. Residues Cys-449–Lys-452 lie on the Extracellular side of the membrane. The chain crosses the membrane as a helical span at residues Phe-453–Phe-473. Residues Leu-474–Val-522 lie on the Cytoplasmic side of the membrane.

This sequence belongs to the major facilitator superfamily. Sugar transporter (TC 2.A.1.1) family. As to expression, mostly expressed in young leaves, especially in guard cells (at protein level). Also present in roots.

The protein resides in the cell membrane. Major hexose transporter. Mediates an active uptake of hexoses, by sugar/hydrogen symport. Can transport glucose, 3-O-methylglucose, fructose, xylose, mannose, galactose, fucose, 2-deoxyglucose and arabinose. Confers sensitivity to galactose in seedlings. In Arabidopsis thaliana (Mouse-ear cress), this protein is Sugar transport protein 1 (STP1).